The primary structure comprises 385 residues: Cytochrome b (385 aa).

4 consecutive transmembrane segments (helical) span residues 34–54 (FGSI…ILTM), 78–99 (WFIR…FIHI), 114–134 (WYSG…GYVL), and 179–199 (FLVL…THLL). Heme b contacts are provided by H84 and H98. 2 residues coordinate heme b: H183 and H197. H202 contacts a ubiquinone. The next 4 helical transmembrane spans lie at 227–247 (FKDI…STLF), 289–309 (LMGV…PFLI), 321–341 (FMQF…WLGA), and 348–368 (YTIM…FLFP).

The protein belongs to the cytochrome b family. The cytochrome bc1 complex contains 3 respiratory subunits (MT-CYB, CYC1 and UQCRFS1), 2 core proteins (UQCRC1 and UQCRC2) and probably 6 low-molecular weight proteins. It depends on heme b as a cofactor.

Its subcellular location is the mitochondrion inner membrane. Component of the ubiquinol-cytochrome c reductase complex (complex III or cytochrome b-c1 complex) that is part of the mitochondrial respiratory chain. The b-c1 complex mediates electron transfer from ubiquinol to cytochrome c. Contributes to the generation of a proton gradient across the mitochondrial membrane that is then used for ATP synthesis. This is Cytochrome b (MT-CYB) from Myxine glutinosa (Atlantic hagfish).